We begin with the raw amino-acid sequence, 114 residues long: Probable acid stress chaperone HdeA (114 aa).

A signal peptide spans 1 to 26 (MIKALFNKNTALAAVTILALSGGAMA). C46 and C94 form a disulfide bridge.

Belongs to the HdeA family.

The protein resides in the periplasm. In terms of biological role, required for optimal acid stress protection. Exhibits a chaperone-like activity only at low pH by suppressing non-specifically the aggregation of denaturated periplasmic proteins. This is Probable acid stress chaperone HdeA from Brucella suis biovar 1 (strain 1330).